The following is a 102-amino-acid chain: Small ribosomal subunit protein uS10 (102 aa).

This sequence belongs to the universal ribosomal protein uS10 family. In terms of assembly, part of the 30S ribosomal subunit.

Involved in the binding of tRNA to the ribosomes. The chain is Small ribosomal subunit protein uS10 from Symbiobacterium thermophilum (strain DSM 24528 / JCM 14929 / IAM 14863 / T).